The following is a 28-amino-acid chain: U-actitoxin-Ate1 (28 aa).

The first 15 residues, 1-15, serve as a signal peptide directing secretion; it reads MSLILIFFAFTVLKS. Cys20 and Cys26 form a disulfide bridge.

Monomer in solution. Post-translationally, may be N-glycosylated at Asn-22. Activity with this modification has not be tested. In terms of tissue distribution, highly expressed in the tentacles. Weakly expressed in acrorhagi and mesenteric filaments.

The protein localises to the secreted. The protein resides in the nematocyst. Probable toxin expected to be employed in prey capture and/or defense against predators (based on its abundance in tentacles). Has only a weak affinity for lipid membranes. Shows moderate cytotoxic activity against breast cancer cell lines (MCF-7 and MDA-MB-231). This chain is U-actitoxin-Ate1, found in Actinia tenebrosa (Australian red waratah sea anemone).